A 438-amino-acid chain; its full sequence is Gamma-glutamyl phosphate reductase (438 aa).

The protein belongs to the gamma-glutamyl phosphate reductase family.

Its subcellular location is the cytoplasm. The catalysed reaction is L-glutamate 5-semialdehyde + phosphate + NADP(+) = L-glutamyl 5-phosphate + NADPH + H(+). It participates in amino-acid biosynthesis; L-proline biosynthesis; L-glutamate 5-semialdehyde from L-glutamate: step 2/2. Functionally, catalyzes the NADPH-dependent reduction of L-glutamate 5-phosphate into L-glutamate 5-semialdehyde and phosphate. The product spontaneously undergoes cyclization to form 1-pyrroline-5-carboxylate. This Prochlorococcus marinus (strain MIT 9303) protein is Gamma-glutamyl phosphate reductase.